We begin with the raw amino-acid sequence, 124 residues long: Kinocilin (124 aa).

2 helical membrane-spanning segments follow: residues 13 to 33 and 40 to 60; these read LQLA…GISV and MGGV…YPFL. Positions 80–124 are disordered; that stretch reads PHPGADHGEGRSSTNGNKEGARSSLSTVSRTLEKLKPGTRGAEEC. Residues 90–109 show a composition bias toward polar residues; the sequence is RSSTNGNKEGARSSLSTVSR. The span at 110–124 shows a compositional bias: basic and acidic residues; it reads TLEKLKPGTRGAEEC.

Its subcellular location is the membrane. Functionally, may play a role in stabilizing dense microtubular networks or in vesicular trafficking. This is Kinocilin (KNCN) from Homo sapiens (Human).